Reading from the N-terminus, the 232-residue chain is Ubiquinone biosynthesis O-methyltransferase (232 aa).

R36, G55, D76, and L120 together coordinate S-adenosyl-L-methionine.

The protein belongs to the methyltransferase superfamily. UbiG/COQ3 family.

The enzyme catalyses a 3-demethylubiquinol + S-adenosyl-L-methionine = a ubiquinol + S-adenosyl-L-homocysteine + H(+). It carries out the reaction a 3-(all-trans-polyprenyl)benzene-1,2-diol + S-adenosyl-L-methionine = a 2-methoxy-6-(all-trans-polyprenyl)phenol + S-adenosyl-L-homocysteine + H(+). The protein operates within cofactor biosynthesis; ubiquinone biosynthesis. Its function is as follows. O-methyltransferase that catalyzes the 2 O-methylation steps in the ubiquinone biosynthetic pathway. This chain is Ubiquinone biosynthesis O-methyltransferase, found in Pseudomonas paraeruginosa (strain DSM 24068 / PA7) (Pseudomonas aeruginosa (strain PA7)).